Consider the following 217-residue polypeptide: Probable GTP-binding protein EngB (217 aa).

The 174-residue stretch at 44–217 (DRVEVCFAGR…TLRSIIAHLE (174 aa)) folds into the EngB-type G domain. Residues 52-59 (GRSNVGKS), 79-83 (GRTQE), 97-100 (DLPG), 164-167 (TKAD), and 198-200 (TSS) each bind GTP. Mg(2+)-binding residues include serine 59 and threonine 81.

This sequence belongs to the TRAFAC class TrmE-Era-EngA-EngB-Septin-like GTPase superfamily. EngB GTPase family. Requires Mg(2+) as cofactor.

In terms of biological role, necessary for normal cell division and for the maintenance of normal septation. This chain is Probable GTP-binding protein EngB, found in Ruegeria pomeroyi (strain ATCC 700808 / DSM 15171 / DSS-3) (Silicibacter pomeroyi).